A 139-amino-acid chain; its full sequence is Transcription antitermination protein NusB (139 aa).

It belongs to the NusB family.

Functionally, involved in transcription antitermination. Required for transcription of ribosomal RNA (rRNA) genes. Binds specifically to the boxA antiterminator sequence of the ribosomal RNA (rrn) operons. The chain is Transcription antitermination protein NusB from Nitratiruptor sp. (strain SB155-2).